Reading from the N-terminus, the 208-residue chain is Imidazoleglycerol-phosphate dehydratase (208 aa).

Belongs to the imidazoleglycerol-phosphate dehydratase family.

The enzyme catalyses D-erythro-1-(imidazol-4-yl)glycerol 3-phosphate = 3-(imidazol-4-yl)-2-oxopropyl phosphate + H2O. The protein operates within amino-acid biosynthesis; L-histidine biosynthesis; L-histidine from 5-phospho-alpha-D-ribose 1-diphosphate: step 6/9. The protein is Imidazoleglycerol-phosphate dehydratase (his3) of Trichoderma harzianum (Hypocrea lixii).